The chain runs to 29 residues: Trypsin inhibitor 5 (29 aa).

Cystine bridges form between cysteine 3–cysteine 20, cysteine 10–cysteine 22, and cysteine 16–cysteine 28.

This sequence belongs to the protease inhibitor I7 (squash-type serine protease inhibitor) family.

Its subcellular location is the secreted. In terms of biological role, strongly inhibits trypsin, weakly inhibits chymotrypsin. This is Trypsin inhibitor 5 from Cyclanthera pedata (Achocha).